The sequence spans 755 residues: Ribosome biogenesis protein BOP1 (755 aa).

Composition is skewed to polar residues over residues 1–10 (MSQEPSSSFS) and 43–61 (ELSS…TEPN). A disordered region spans residues 1–65 (MSQEPSSSFS…PLTEPNNIPI (65 aa)). An interaction with EB1 region spans residues 309 to 754 (MDSMLPTLPN…SGTDGVLRLF (446 aa)). The stretch at 335 to 374 (TGTRRINGLTFSPKGMFFAVGGRDCILRVFETYSGRQVRA) is one WD 1 repeat. The interval 482–505 (YNEGSEDDDAAESARFNEERHQRG) is disordered. The span at 496-505 (RFNEERHQRG) shows a compositional bias: basic and acidic residues. WD repeat units lie at residues 617 to 655 (PGVK…EPTA), 659 to 698 (YHTS…LVKM), and 725 to 755 (DGSV…RLFK).

It belongs to the WD repeat BOP1/ERB1 family. As to quaternary structure, interacts (via C-terminal WD repeats) with giardin subunit beta. Interacts (via C-terminal WD repeats) with EB1.

The protein resides in the nucleus. It is found in the nucleolus. It localises to the nucleus membrane. Required for maturation of ribosomal RNAs and formation of the large ribosomal subunit. This is Ribosome biogenesis protein BOP1 from Giardia intestinalis (Giardia lamblia).